The sequence spans 388 residues: Succinate--CoA ligase [ADP-forming] subunit beta (388 aa).

The ATP-grasp domain maps to 9 to 244 (KSLFAEYGLP…PSQDDAREAH (236 aa)). ATP contacts are provided by residues K46, 53–55 (GRG), E99, T102, and E107. Positions 199 and 213 each coordinate Mg(2+). Residues N264 and 321–323 (GIV) contribute to the substrate site.

Belongs to the succinate/malate CoA ligase beta subunit family. Heterotetramer of two alpha and two beta subunits. Requires Mg(2+) as cofactor.

The catalysed reaction is succinate + ATP + CoA = succinyl-CoA + ADP + phosphate. It carries out the reaction GTP + succinate + CoA = succinyl-CoA + GDP + phosphate. It participates in carbohydrate metabolism; tricarboxylic acid cycle; succinate from succinyl-CoA (ligase route): step 1/1. Succinyl-CoA synthetase functions in the citric acid cycle (TCA), coupling the hydrolysis of succinyl-CoA to the synthesis of either ATP or GTP and thus represents the only step of substrate-level phosphorylation in the TCA. The beta subunit provides nucleotide specificity of the enzyme and binds the substrate succinate, while the binding sites for coenzyme A and phosphate are found in the alpha subunit. The protein is Succinate--CoA ligase [ADP-forming] subunit beta of Shewanella putrefaciens (strain CN-32 / ATCC BAA-453).